The primary structure comprises 458 residues: Bifunctional protein GlmU (458 aa).

Residues 1-232 (MTSSLSVIIL…TFEIEGVNNR (232 aa)) are pyrophosphorylase. Residues 10–13 (LAAG), lysine 24, glutamine 79, 84–85 (GT), 106–108 (YGD), glycine 142, glutamate 157, asparagine 172, and asparagine 230 contribute to the UDP-N-acetyl-alpha-D-glucosamine site. Aspartate 108 contributes to the Mg(2+) binding site. Asparagine 230 lines the Mg(2+) pocket. Positions 233–253 (QQLASLERTWQGKLVADLQEA) are linker. An N-acetyltransferase region spans residues 254–458 (GVQFADPTRV…KNDFKRPTKK (205 aa)). 2 residues coordinate UDP-N-acetyl-alpha-D-glucosamine: arginine 336 and lysine 354. Catalysis depends on histidine 366, which acts as the Proton acceptor. UDP-N-acetyl-alpha-D-glucosamine-binding residues include tyrosine 369 and asparagine 380. Acetyl-CoA contacts are provided by residues alanine 383, 389 to 390 (NY), serine 408, alanine 426, and arginine 443.

It in the N-terminal section; belongs to the N-acetylglucosamine-1-phosphate uridyltransferase family. In the C-terminal section; belongs to the transferase hexapeptide repeat family. As to quaternary structure, homotrimer. Requires Mg(2+) as cofactor.

The protein resides in the cytoplasm. The catalysed reaction is alpha-D-glucosamine 1-phosphate + acetyl-CoA = N-acetyl-alpha-D-glucosamine 1-phosphate + CoA + H(+). It carries out the reaction N-acetyl-alpha-D-glucosamine 1-phosphate + UTP + H(+) = UDP-N-acetyl-alpha-D-glucosamine + diphosphate. Its pathway is nucleotide-sugar biosynthesis; UDP-N-acetyl-alpha-D-glucosamine biosynthesis; N-acetyl-alpha-D-glucosamine 1-phosphate from alpha-D-glucosamine 6-phosphate (route II): step 2/2. The protein operates within nucleotide-sugar biosynthesis; UDP-N-acetyl-alpha-D-glucosamine biosynthesis; UDP-N-acetyl-alpha-D-glucosamine from N-acetyl-alpha-D-glucosamine 1-phosphate: step 1/1. It participates in bacterial outer membrane biogenesis; LPS lipid A biosynthesis. Catalyzes the last two sequential reactions in the de novo biosynthetic pathway for UDP-N-acetylglucosamine (UDP-GlcNAc). The C-terminal domain catalyzes the transfer of acetyl group from acetyl coenzyme A to glucosamine-1-phosphate (GlcN-1-P) to produce N-acetylglucosamine-1-phosphate (GlcNAc-1-P), which is converted into UDP-GlcNAc by the transfer of uridine 5-monophosphate (from uridine 5-triphosphate), a reaction catalyzed by the N-terminal domain. This chain is Bifunctional protein GlmU, found in Psychrobacter cryohalolentis (strain ATCC BAA-1226 / DSM 17306 / VKM B-2378 / K5).